A 29-amino-acid chain; its full sequence is Cytochrome b6-f complex subunit 8 (29 aa).

Residues 3-23 (IVNIAWAALMVVSTFSLTLVV) form a helical membrane-spanning segment.

It belongs to the PetN family. As to quaternary structure, the 4 large subunits of the cytochrome b6-f complex are cytochrome b6, subunit IV (17 kDa polypeptide, PetD), cytochrome f and the Rieske protein, while the 4 small subunits are PetG, PetL, PetM and PetN. The complex functions as a dimer.

The protein localises to the plastid. It is found in the chloroplast thylakoid membrane. Its function is as follows. Component of the cytochrome b6-f complex, which mediates electron transfer between photosystem II (PSII) and photosystem I (PSI), cyclic electron flow around PSI, and state transitions. The sequence is that of Cytochrome b6-f complex subunit 8 from Huperzia lucidula (Shining clubmoss).